The sequence spans 339 residues: 4-hydroxy-2-oxovalerate aldolase (339 aa).

A Pyruvate carboxyltransferase domain is found at 7–259 (VILHDMSLRD…QSGIDLYKIM (253 aa)). 15–16 (RD) contributes to the substrate binding site. Aspartate 16 provides a ligand contact to Mn(2+). Histidine 19 acts as the Proton acceptor in catalysis. Residues serine 169 and histidine 198 each contribute to the substrate site. Residues histidine 198 and histidine 200 each contribute to the Mn(2+) site. Position 289 (tyrosine 289) interacts with substrate.

The protein belongs to the 4-hydroxy-2-oxovalerate aldolase family.

The catalysed reaction is (S)-4-hydroxy-2-oxopentanoate = acetaldehyde + pyruvate. The sequence is that of 4-hydroxy-2-oxovalerate aldolase from Marinomonas sp. (strain MWYL1).